Here is a 579-residue protein sequence, read N- to C-terminus: 2-succinyl-5-enolpyruvyl-6-hydroxy-3-cyclohexene-1-carboxylate synthase (579 aa).

This sequence belongs to the TPP enzyme family. MenD subfamily. Homodimer. Mg(2+) serves as cofactor. It depends on Mn(2+) as a cofactor. The cofactor is thiamine diphosphate.

It catalyses the reaction isochorismate + 2-oxoglutarate + H(+) = 5-enolpyruvoyl-6-hydroxy-2-succinyl-cyclohex-3-ene-1-carboxylate + CO2. The protein operates within quinol/quinone metabolism; 1,4-dihydroxy-2-naphthoate biosynthesis; 1,4-dihydroxy-2-naphthoate from chorismate: step 2/7. It functions in the pathway quinol/quinone metabolism; menaquinone biosynthesis. In terms of biological role, catalyzes the thiamine diphosphate-dependent decarboxylation of 2-oxoglutarate and the subsequent addition of the resulting succinic semialdehyde-thiamine pyrophosphate anion to isochorismate to yield 2-succinyl-5-enolpyruvyl-6-hydroxy-3-cyclohexene-1-carboxylate (SEPHCHC). This chain is 2-succinyl-5-enolpyruvyl-6-hydroxy-3-cyclohexene-1-carboxylate synthase, found in Shewanella frigidimarina (strain NCIMB 400).